Reading from the N-terminus, the 540-residue chain is Glucose-6-phosphate isomerase (540 aa).

Glu350 acts as the Proton donor in catalysis. Residues His381 and Lys503 contribute to the active site.

Belongs to the GPI family.

It is found in the cytoplasm. It carries out the reaction alpha-D-glucose 6-phosphate = beta-D-fructose 6-phosphate. Its pathway is carbohydrate biosynthesis; gluconeogenesis. The protein operates within carbohydrate degradation; glycolysis; D-glyceraldehyde 3-phosphate and glycerone phosphate from D-glucose: step 2/4. Catalyzes the reversible isomerization of glucose-6-phosphate to fructose-6-phosphate. This is Glucose-6-phosphate isomerase from Burkholderia cenocepacia (strain ATCC BAA-245 / DSM 16553 / LMG 16656 / NCTC 13227 / J2315 / CF5610) (Burkholderia cepacia (strain J2315)).